The chain runs to 286 residues: Protein PXR1 (286 aa).

A disordered region spans residues 1-20 (MGLAGTKVKQRFGLDPRNTS). The 47-residue stretch at 25-71 (KSRFGHRYLESMGWAPGKGLGLVEHATTTHVKVSVKDDTVGLGAKLA) folds into the G-patch domain. Positions 148 to 255 (EDESEVNFKS…PRKHDQISNV (108 aa)) are disordered. Positions 168–198 (PSRDSTSHAKRMRGDESKKSTRDQSKQERKE) are enriched in basic and acidic residues. Residues 199–230 (KKIKTEKKEKKEKKEKKEKKEKKEKKEKKEKK) show a composition bias toward basic residues.

The protein belongs to the PINX1 family.

The protein resides in the nucleus. The protein localises to the nucleolus. Involved in rRNA-processing at A0, A1 and A2 sites and negatively regulates telomerase. The polypeptide is Protein PXR1 (PXR1) (Meyerozyma guilliermondii (strain ATCC 6260 / CBS 566 / DSM 6381 / JCM 1539 / NBRC 10279 / NRRL Y-324) (Yeast)).